The sequence spans 303 residues: Mitochondrial carrier homolog 2 (303 aa).

A2 carries the N-acetylalanine modification. Topologically, residues 2 to 15 are mitochondrial intermembrane; sequence ADAASQVLLGSGLT. Solcar repeat units follow at residues 2–98 and 118–206; these read ADAA…YQEC and DRVI…VNTY. A helical membrane pass occupies residues 16-36; that stretch reads ILSQPLMYVKVLIQVGYEPLA. Residues 37–77 lie on the Cytoplasmic side of the membrane; sequence PTVGRNIFGRQVCQLPGLFCYAQHIASIDGKRGLFTGLTPR. The helical transmembrane segment at 78 to 92 threads the bilayer; the sequence is LCSGVLGTVVHGKVL. Residues 93-135 lie on the Mitochondrial intermembrane side of the membrane; that stretch reads QHYQECDKAEESGSGNVQKEVSSSFDRVIKETTREMMARSAAT. A helical membrane pass occupies residues 136–156; the sequence is LITHPFHVITLRSMVQFIGRE. The Cytoplasmic segment spans residues 157-180; sequence SKYCGLCDSIATIYREEGILGFFA. A helical membrane pass occupies residues 181–199; it reads GLIPRLLGDIISLWLCNSL. Residues 200–231 lie on the Mitochondrial intermembrane side of the membrane; that stretch reads AYLVNTYALDSGVSTMNEMKSYSQAVTGFFAS. The chain crosses the membrane as a helical span at residues 232 to 252; that stretch reads MLTYPFVLVSNLMAVNNCGLA. The Cytoplasmic portion of the chain corresponds to 253–280; that stretch reads GGCPPYAPIYSSWIDCWCMLQKEGNMSR. A helical membrane pass occupies residues 281-303; that stretch reads GNSLFFRKVPFGKTYCCDLRMLI.

This sequence belongs to the mitochondrial carrier (TC 2.A.29) family. As to quaternary structure, interacts with p15BID.

The protein localises to the mitochondrion outer membrane. Its function is as follows. Protein insertase that mediates insertion of transmembrane proteins into the mitochondrial outer membrane. Catalyzes insertion of proteins with alpha-helical transmembrane regions, such as signal-anchored, tail-anchored and multi-pass membrane proteins. Does not mediate insertion of beta-barrel transmembrane proteins. Also acts as a receptor for the truncated form of pro-apoptotic BH3-interacting domain death agonist (p15 BID) and has therefore a critical function in apoptosis. Regulates the quiescence/cycling of hematopoietic stem cells (HSCs). Acts as a regulator of mitochondrial fusion, essential for the naive-to-primed interconversion of embryonic stem cells (ESCs). Acts as a regulator of lipid homeostasis and has a regulatory role in adipocyte differentiation and biology. This is Mitochondrial carrier homolog 2 (MTCH2) from Bos taurus (Bovine).